Consider the following 147-residue polypeptide: Small ribosomal subunit protein uS12 (147 aa).

A disordered region spans residues 1–22 (MPTINQLVRKPRKSKIEKSDSP). Asp-102 carries the post-translational modification 3-methylthioaspartic acid.

The protein belongs to the universal ribosomal protein uS12 family. As to quaternary structure, part of the 30S ribosomal subunit. Contacts proteins S8 and S17. May interact with IF1 in the 30S initiation complex.

In terms of biological role, with S4 and S5 plays an important role in translational accuracy. Interacts with and stabilizes bases of the 16S rRNA that are involved in tRNA selection in the A site and with the mRNA backbone. Located at the interface of the 30S and 50S subunits, it traverses the body of the 30S subunit contacting proteins on the other side and probably holding the rRNA structure together. The combined cluster of proteins S8, S12 and S17 appears to hold together the shoulder and platform of the 30S subunit. In Streptococcus pyogenes serotype M12 (strain MGAS2096), this protein is Small ribosomal subunit protein uS12.